The chain runs to 279 residues: Digeranylgeranylglyceryl phosphate synthase (279 aa).

9 consecutive transmembrane segments (helical) span residues 16 to 36 (LIAG…LPPI), 40 to 60 (LLIF…NDYF), 77 to 99 (GALS…ILIA), 104 to 121 (FEAF…YLYA), 124 to 144 (LKPQ…ITPI), 146 to 166 (GAIA…AFLV), 192 to 212 (IVWG…ATII), 220 to 240 (AGIG…LWAA), and 259 to 279 (LKIA…TKGV).

Belongs to the UbiA prenyltransferase family. DGGGP synthase subfamily. Mg(2+) serves as cofactor.

Its subcellular location is the cell membrane. It carries out the reaction sn-3-O-(geranylgeranyl)glycerol 1-phosphate + (2E,6E,10E)-geranylgeranyl diphosphate = 2,3-bis-O-(geranylgeranyl)-sn-glycerol 1-phosphate + diphosphate. Its pathway is membrane lipid metabolism; glycerophospholipid metabolism. Its function is as follows. Prenyltransferase that catalyzes the transfer of the geranylgeranyl moiety of geranylgeranyl diphosphate (GGPP) to the C2 hydroxyl of (S)-3-O-geranylgeranylglyceryl phosphate (GGGP). This reaction is the second ether-bond-formation step in the biosynthesis of archaeal membrane lipids. The protein is Digeranylgeranylglyceryl phosphate synthase of Thermococcus sibiricus (strain DSM 12597 / MM 739).